We begin with the raw amino-acid sequence, 383 residues long: NIPA-like protein 2 (383 aa).

Residues Asn23 and Asn33 are each glycosylated (N-linked (GlcNAc...) asparagine). A run of 7 helical transmembrane segments spans residues 46–66 (IHLF…ISLN), 88–108 (VLWW…FAAY), 110–130 (FAPI…SAII), 144–164 (LLGT…APNI), 177–197 (LVGW…CILL), 209–229 (VILL…VKAV), and 243–263 (LTYP…VFQV). An N-linked (GlcNAc...) asparagine glycan is attached at Asn274. 2 helical membrane passes run 278–298 (VVPV…IIFY) and 306–326 (FLTV…VFLV). The segment at 355-383 (QPDSHSLSYGTLPDGSDSTKSQSGEKKEV) is disordered.

It belongs to the NIPA family.

The protein resides in the membrane. This chain is NIPA-like protein 2 (NIPAL2), found in Homo sapiens (Human).